Consider the following 248-residue polypeptide: Thioesterase FSL2 (248 aa).

Residues Ser125, Asp195, and His223 each act as charge relay system in the active site.

The protein belongs to the LovG family.

Its pathway is secondary metabolite biosynthesis. Its function is as follows. Thioesterase; part of the gene cluster that mediates the biosynthesis of fusarielins F, G and H, decaketide compounds with 5 methylations and a decaline core that act as mycoestrogens as they stimulate growth of MCF-7 breast cancer cells. The initial compound in the pathway is produced by the reducing polyketide synthase FSL1. FSL1 lacks an active enoyl reductase (ER) domain and biosynthesis of fusarielins relies on the trans-acting enoyl reductase FSL5, before it is released through hydrolysis catalyzed by the thioesterase FSL2. Fusarielins F, G, and H have a C11=C12 cis double bond and is fully reduced between C10 and C11 and between C12 and C13. FSL3 can be involved in the formation of the C11=C12 cis double bond by moving a hypothetical C10=C11 or C12=C13 trans double bond to form prefusarielin. Prefusarielin is oxygenated at C15 and C16 by the cytochrome P450 monooxygenase FSL4, resulting in fusarielin F, which subsequently is epoxidized into fusarielin G by the same enzyme. The final step in the pathway is a reduction of the carboxylic acid moiety to yield fusarielin H via a still undetermined mechanism. The chain is Thioesterase FSL2 from Gibberella zeae (strain ATCC MYA-4620 / CBS 123657 / FGSC 9075 / NRRL 31084 / PH-1) (Wheat head blight fungus).